Reading from the N-terminus, the 386-residue chain is Mannitol-1-phosphate 5-dehydrogenase (386 aa).

NAD(+) is bound at residue 3 to 14; that stretch reads AVHFGAGNIGRG.

It belongs to the mannitol dehydrogenase family.

The enzyme catalyses D-mannitol 1-phosphate + NAD(+) = beta-D-fructose 6-phosphate + NADH + H(+). This Brevibacillus brevis (strain 47 / JCM 6285 / NBRC 100599) protein is Mannitol-1-phosphate 5-dehydrogenase.